The sequence spans 695 residues: Spermidine/spermine N(1)-acetyltransferase-like protein 1 (695 aa).

3 stretches are compositionally biased toward polar residues: residues 1–39 (MNQS…QGSA), 52–68 (PSMS…NLPD), and 78–98 (DTWQ…SQLV). Disordered regions lie at residues 1 to 274 (MNQS…MNQM), 290 to 332 (DMKQ…PGMW), 344 to 375 (ASIS…NQSG), and 387 to 493 (RQSG…GLSQ). Low complexity predominate over residues 105–122 (SQPDPSQPGPSQSGPSQS). Composition is skewed to polar residues over residues 123-179 (RMRQ…TGLS), 197-208 (GVQQPGISQQVP), 231-266 (PDTS…QPSP), 294-310 (PSMS…NLPD), 355-375 (APSQ…NQSG), 389-422 (SGGS…TGLS), and 459-471 (PGTS…QTGM). The region spanning 529 to 695 (FQIRHAEAGD…EELLDMAWEE (167 aa)) is the N-acetyltransferase domain. A substrate-binding site is contributed by 552–553 (CE). Acetyl-CoA-binding positions include 618-620 (FYV) and 626-631 (GLGIGA). Substrate is bound by residues 650–652 (HFL) and Glu676.

It belongs to the acetyltransferase family.

In Homo sapiens (Human), this protein is Spermidine/spermine N(1)-acetyltransferase-like protein 1 (SATL1).